A 279-amino-acid chain; its full sequence is uncharacterized protein (279 aa).

The signal sequence occupies residues 1–19 (MKLKLYLIPLLASGIILSA). A lipid anchor (N-palmitoyl cysteine) is attached at Cys-20. Cys-20 carries S-diacylglycerol cysteine lipidation.

It belongs to the MG439/MG440 family.

It localises to the cell membrane. This is an uncharacterized protein from Mycoplasma pneumoniae (strain ATCC 29342 / M129 / Subtype 1) (Mycoplasmoides pneumoniae).